Reading from the N-terminus, the 403-residue chain is Zinc finger CCHC domain-containing protein 3 (403 aa).

A disordered region spans residues 1 to 158 (MATGGGAEEE…PLQDEPAAAA (158 aa)). Basic and acidic residues-rich tracts occupy residues 26-38 (ARGE…REKM) and 47-65 (LAEK…REEE). Residues 67-79 (GGGGGSAGLGGPA) show a composition bias toward gly residues. Positions 95 to 121 (GDPKGRRRDPAGEAVDPRKKKGAAEAG) are enriched in basic and acidic residues. Residues 128–139 (AAAAAMATPARP) are compositionally biased toward low complexity. Y201 carries the post-translational modification Phosphotyrosine. CCHC-type zinc fingers lie at residues 335–350 (CFKC…SCTQ), 352–368 (RCFR…YCRK), and 372–387 (CNLC…QCPK).

Interacts with CGAS. Interacts with RIGI. Interacts with IFIH1/MDA5.

The protein resides in the cytoplasm. Its function is as follows. Nucleic acid-binding protein involved in innate immune response to DNA and RNA viruses. Binds DNA and RNA in the cytoplasm and acts by promoting recognition of viral nucleic acids by virus sensors, such as RIGI, IFIH1/MDA5 and CGAS. Acts as a co-sensor for recognition of double-stranded DNA (dsDNA) by cGAS in the cytoplasm, thereby playing a role in innate immune response to cytosolic dsDNA and DNA virus. Binds dsDNA and probably acts by promoting sensing of dsDNA by CGAS, leading to enhance CGAS oligomerization and activation. Promotes sensing of viral RNA by RIGI-like receptors proteins RIGI and IFIH1/MDA5 via two mechanisms: binds double-stranded RNA (dsRNA), enhancing the binding of RIGI and IFIH1/MDA5 to dsRNA and promotes 'Lys-63'-linked ubiquitination and subsequent activation of RIGI and IFIH1/MDA5. This is Zinc finger CCHC domain-containing protein 3 from Homo sapiens (Human).